A 1491-amino-acid chain; its full sequence is Copper-transporting ATPase 1 (1491 aa).

At 1-644 (MEPSVDANSI…KREIKQWRGS (644 aa)) the chain is on the cytoplasmic side. 2 HMA domains span residues 8–74 (NSIT…FDAL) and 85–151 (TNTV…LDMG). Cu(+) contacts are provided by Thr-18, Cys-19, and Cys-22. Position 152 is a phosphothreonine (Thr-152). Residues 171 to 237 (VMLKMKVEGM…QIEAVGFPAF (67 aa)) enclose the HMA 3 domain. Cys-182 and Cys-185 together coordinate Cu(+). A Phosphoserine modification is found at Ser-270. The 67-residue stretch at 277–343 (STTMFTIEGM…AIEAISPGQY (67 aa)) folds into the HMA 4 domain. The Cu(+) site is built by Cys-288 and Cys-291. Thr-327 is modified (phosphothreonine). 4 positions are modified to phosphoserine: Ser-339, Ser-353, Ser-357, and Ser-362. 3 consecutive HMA domains span residues 377-443 (QEAV…FDAA), 479-545 (NKCY…FGAM), and 555-621 (GILE…FEAS). Positions 388, 391, 490, 493, 566, and 569 each coordinate Cu(+). A helical membrane pass occupies residues 645–666 (FLVSLFFCIPVMGLMVYMMVMD). Over 667–705 (HHLATLHHNQNMSNEEMINMHSAMFLERQILPGLSIMNL) the chain is Extracellular. N-linked (GlcNAc...) asparagine glycosylation is present at Asn-677. Residues 706-725 (LSLLLCLPVQFCGGWYFYIQ) traverse the membrane as a helical segment. Residues 726–732 (AYKALKH) are Cytoplasmic-facing. The chain crosses the membrane as a helical span at residues 733-753 (KTANMDVLIVLATTIAFAYSL). The Extracellular portion of the chain corresponds to 754-772 (VILLVAMFERAKVNPITFF). Residues 773 to 793 (DTPPMLFVFIALGRWLEHIAK) form a helical membrane-spanning segment. Over 794–926 (GKTSEALAKL…SKAPIQQFAD (133 aa)) the chain is Cytoplasmic. Residues 927 to 950 (KLSGYFVPFIVLVSIVTLLVWIII) form a helical membrane-spanning segment. Residues 951 to 980 (GFQNFEIVETYFPGYNRSISRTETIIRFAF) are Extracellular-facing. Asn-966 carries an N-linked (GlcNAc...) asparagine glycan. The helical transmembrane segment at 981–1002 (QASITVLCIACPCSLGLATPTA) threads the bilayer. The Cytoplasmic portion of the chain corresponds to 1003–1347 (VMVGTGVGAQ…LSRKTVKRIR (345 aa)). The active-site 4-aspartylphosphate intermediate is the Asp-1035. An ATP-binding site is contributed by Glu-1072. Thr-1203 is modified (phosphothreonine). Asp-1292 and Asp-1296 together coordinate Mg(2+). The chain crosses the membrane as a helical span at residues 1348–1365 (INFVFALIYNLVGIPIAA). Residues 1366–1376 (GVFLPIGLVLQ) are Extracellular-facing. A helical membrane pass occupies residues 1377 to 1396 (PWMGSAAMAASSVSVVLSSL). Over 1397–1491 (FLKLYRKPTY…DFREDDDTTL (95 aa)) the chain is Cytoplasmic. Residues Ser-1421, Ser-1423, Ser-1451, Ser-1454, and Ser-1457 each carry the phosphoserine modification. The short motif at 1458 to 1459 (LL) is the Endocytosis signal element. 4 positions are modified to phosphoserine: Ser-1460, Ser-1464, Ser-1467, and Ser-1477. The tract at residues 1477-1491 (SLLVGDFREDDDTTL) is PDZD11-binding. An Endocytosis signal motif is present at residues 1478 to 1479 (LL).

Belongs to the cation transport ATPase (P-type) (TC 3.A.3) family. Type IB subfamily. Monomer. Interacts with PDZD11. Interacts with ATOX1 and COMMD1. Interacts with TYRP1. Directly interacts with SOD3; this interaction is copper-dependent and is required for SOD3 activity. In terms of tissue distribution, widely expressed. Highly expressed in pituitary endocrine cells. Expressed in melanocytes (at protein level). Expressed in motor neuron (at protein level). Expressed in hippocampal neuron (at protein level). In the kidney, it is detected in the proximal and distal tubules (at protein level). Expressed in aorta (at protein level).

The protein localises to the golgi apparatus. Its subcellular location is the trans-Golgi network membrane. It localises to the cell membrane. The protein resides in the melanosome membrane. It is found in the early endosome membrane. The protein localises to the cell projection. Its subcellular location is the axon. It localises to the dendrite. The protein resides in the postsynaptic density. The enzyme catalyses Cu(+)(in) + ATP + H2O = Cu(+)(out) + ADP + phosphate + H(+). In terms of biological role, ATP-driven copper (Cu(+)) ion pump that plays an important role in intracellular copper ion homeostasis. Within a catalytic cycle, acquires Cu(+) ion from donor protein on the cytoplasmic side of the membrane and delivers it to acceptor protein on the lumenal side. The transfer of Cu(+) ion across the membrane is coupled to ATP hydrolysis and is associated with a transient phosphorylation that shifts the pump conformation from inward-facing to outward-facing state. Under physiological conditions, at low cytosolic copper concentration, it is localized at the trans-Golgi network (TGN) where it transfers Cu(+) ions to cuproenzymes of the secretory pathway. Upon elevated cytosolic copper concentrations, it relocalizes to the plasma membrane where it is responsible for the export of excess Cu(+) ions. May play a dual role in neuron function and survival by regulating cooper efflux and neuronal transmission at the synapse as well as by supplying Cu(+) ions to enzymes such as PAM, TYR and SOD3. In the melanosomes of pigmented cells, provides copper cofactor to TYR to form an active TYR holoenzyme for melanin biosynthesis. This Mus musculus (Mouse) protein is Copper-transporting ATPase 1.